Reading from the N-terminus, the 73-residue chain is Putative antitoxin VapB9 (73 aa).

In terms of biological role, antitoxin component of a possible type II toxin-antitoxin (TA) system. The cognate toxin is VapC9. This is Putative antitoxin VapB9 (vapB9) from Mycobacterium tuberculosis (strain CDC 1551 / Oshkosh).